Consider the following 89-residue polypeptide: Small ribosomal subunit protein uS15 (89 aa).

Belongs to the universal ribosomal protein uS15 family. In terms of assembly, part of the 30S ribosomal subunit. Forms a bridge to the 50S subunit in the 70S ribosome, contacting the 23S rRNA.

One of the primary rRNA binding proteins, it binds directly to 16S rRNA where it helps nucleate assembly of the platform of the 30S subunit by binding and bridging several RNA helices of the 16S rRNA. Functionally, forms an intersubunit bridge (bridge B4) with the 23S rRNA of the 50S subunit in the ribosome. This Bifidobacterium longum subsp. infantis (strain ATCC 15697 / DSM 20088 / JCM 1222 / NCTC 11817 / S12) protein is Small ribosomal subunit protein uS15.